The chain runs to 157 residues: Transcriptional repressor NrdR (157 aa).

The segment at 3–34 (CPFCRHPDSRVVDSRTSDDGLSIRRRRQCPEC) is a zinc-finger region. The region spanning 46–136 (LSVIKRNGVV…VYQGFDSLDD (91 aa)) is the ATP-cone domain.

It belongs to the NrdR family. The cofactor is Zn(2+).

Functionally, negatively regulates transcription of bacterial ribonucleotide reductase nrd genes and operons by binding to NrdR-boxes. This is Transcriptional repressor NrdR from Clavibacter michiganensis subsp. michiganensis (strain NCPPB 382).